A 94-amino-acid chain; its full sequence is Small ribosomal subunit protein uS19c (94 aa).

This sequence belongs to the universal ribosomal protein uS19 family.

It is found in the plastid. The protein resides in the chloroplast. Its function is as follows. Protein S19 forms a complex with S13 that binds strongly to the 16S ribosomal RNA. This chain is Small ribosomal subunit protein uS19c, found in Cyanidioschyzon merolae (strain NIES-3377 / 10D) (Unicellular red alga).